The primary structure comprises 715 residues: Polyribonucleotide nucleotidyltransferase (715 aa).

Asp487 and Asp493 together coordinate Mg(2+). In terms of domain architecture, KH spans 554 to 613 (PRIETFKIATDKIREVIGTGGKVIREIVEKTGAKVNIDDDGTVKVASSDGESIKAAIKWI). The S1 motif domain maps to 623 to 691 (NAIYDGTVVK…DRGKTRLSMK (69 aa)). Residues 696-715 (ETGEDLEAKQKAAEGATAAE) are disordered.

This sequence belongs to the polyribonucleotide nucleotidyltransferase family. It depends on Mg(2+) as a cofactor.

It localises to the cytoplasm. It carries out the reaction RNA(n+1) + phosphate = RNA(n) + a ribonucleoside 5'-diphosphate. Its function is as follows. Involved in mRNA degradation. Catalyzes the phosphorolysis of single-stranded polyribonucleotides processively in the 3'- to 5'-direction. This chain is Polyribonucleotide nucleotidyltransferase, found in Rhodopseudomonas palustris (strain BisB18).